Consider the following 568-residue polypeptide: Protein adenylyltransferase SelO, mitochondrial (568 aa).

Residues G120, G122, R123, K144, D156, G157, R208, and R215 each coordinate ATP. Catalysis depends on D287, which acts as the Proton acceptor. Positions 288 and 297 each coordinate Mg(2+). D297 serves as a coordination point for ATP.

It belongs to the SELO family. Mg(2+) is required as a cofactor. Forms probably one or more intrachain disulfide bridges.

Its subcellular location is the mitochondrion. It carries out the reaction L-tyrosyl-[protein] + ATP = O-(5'-adenylyl)-L-tyrosyl-[protein] + diphosphate. Catalyzes the transfer of adenosine 5'-monophosphate (AMP) to Tyr residues of target mitochondrial proteins (AMPylation). Involved in redox homeostasis by regulating the cellular response to oxidative stress. Regulates protein S-glutathionylation levels possibly by AMPylation of deglutathionylation enzymes such as glutaredoxins. This Schizosaccharomyces pombe (strain 972 / ATCC 24843) (Fission yeast) protein is Protein adenylyltransferase SelO, mitochondrial.